Consider the following 177-residue polypeptide: Cyclic pyranopterin monophosphate synthase (177 aa).

Residues 89–91 and 125–126 each bind substrate; these read LCH and ME. Aspartate 140 is an active-site residue.

The protein belongs to the MoaC family. Homohexamer; trimer of dimers.

It carries out the reaction (8S)-3',8-cyclo-7,8-dihydroguanosine 5'-triphosphate = cyclic pyranopterin phosphate + diphosphate. It functions in the pathway cofactor biosynthesis; molybdopterin biosynthesis. Functionally, catalyzes the conversion of (8S)-3',8-cyclo-7,8-dihydroguanosine 5'-triphosphate to cyclic pyranopterin monophosphate (cPMP). The chain is Cyclic pyranopterin monophosphate synthase from Streptomyces griseus subsp. griseus (strain JCM 4626 / CBS 651.72 / NBRC 13350 / KCC S-0626 / ISP 5235).